The primary structure comprises 345 residues: Tropomodulin-4 (345 aa).

The segment at 42–63 is disordered; it reads NMLLPAGLRQRDQTKKSPTGPL.

It belongs to the tropomodulin family. Binds to the N-terminus of tropomyosin and to actin. As to expression, highly expressed in skeletal muscle.

It is found in the cytoplasm. It localises to the cytoskeleton. In terms of biological role, blocks the elongation and depolymerization of the actin filaments at the pointed end. The Tmod/TM complex contributes to the formation of the short actin protofilament, which in turn defines the geometry of the membrane skeleton. This Homo sapiens (Human) protein is Tropomodulin-4 (TMOD4).